The chain runs to 418 residues: Glutamyl-tRNA reductase (418 aa).

Residues 49–52, serine 109, 114–116, and glutamine 120 contribute to the substrate site; these read TCNR and EPQ. Cysteine 50 serves as the catalytic Nucleophile. 189–194 contributes to the NADP(+) binding site; it reads GAGETI.

Belongs to the glutamyl-tRNA reductase family. As to quaternary structure, homodimer.

The catalysed reaction is (S)-4-amino-5-oxopentanoate + tRNA(Glu) + NADP(+) = L-glutamyl-tRNA(Glu) + NADPH + H(+). Its pathway is porphyrin-containing compound metabolism; protoporphyrin-IX biosynthesis; 5-aminolevulinate from L-glutamyl-tRNA(Glu): step 1/2. In terms of biological role, catalyzes the NADPH-dependent reduction of glutamyl-tRNA(Glu) to glutamate 1-semialdehyde (GSA). In Erwinia tasmaniensis (strain DSM 17950 / CFBP 7177 / CIP 109463 / NCPPB 4357 / Et1/99), this protein is Glutamyl-tRNA reductase.